Reading from the N-terminus, the 296-residue chain is Ribosomal protein L11 methyltransferase (296 aa).

The S-adenosyl-L-methionine site is built by Thr-139, Gly-163, Asp-185, and Asn-232.

Belongs to the methyltransferase superfamily. PrmA family.

It localises to the cytoplasm. The catalysed reaction is L-lysyl-[protein] + 3 S-adenosyl-L-methionine = N(6),N(6),N(6)-trimethyl-L-lysyl-[protein] + 3 S-adenosyl-L-homocysteine + 3 H(+). Methylates ribosomal protein L11. The polypeptide is Ribosomal protein L11 methyltransferase (Picosynechococcus sp. (strain ATCC 27264 / PCC 7002 / PR-6) (Agmenellum quadruplicatum)).